The chain runs to 378 residues: Ribosomal RNA large subunit methyltransferase G (378 aa).

This sequence belongs to the methyltransferase superfamily. RlmG family.

It localises to the cytoplasm. The enzyme catalyses guanosine(1835) in 23S rRNA + S-adenosyl-L-methionine = N(2)-methylguanosine(1835) in 23S rRNA + S-adenosyl-L-homocysteine + H(+). Specifically methylates the guanine in position 1835 (m2G1835) of 23S rRNA. In Shigella flexneri serotype 5b (strain 8401), this protein is Ribosomal RNA large subunit methyltransferase G.